We begin with the raw amino-acid sequence, 162 residues long: Phenazine biosynthesis protein PhzB 2 (162 aa).

The residue at position 91 (Thr91) is a Phosphothreonine.

This sequence belongs to the PhzA/PhzB family.

In terms of biological role, involved in the biosynthesis of the antibiotic phenazine, a nitrogen-containing heterocyclic molecule having important roles in virulence, competition and biological control. The sequence is that of Phenazine biosynthesis protein PhzB 2 (phzB2) from Pseudomonas aeruginosa (strain UCBPP-PA14).